The primary structure comprises 82 residues: Small ribosomal subunit protein uS17 (82 aa).

Belongs to the universal ribosomal protein uS17 family. Part of the 30S ribosomal subunit.

Functionally, one of the primary rRNA binding proteins, it binds specifically to the 5'-end of 16S ribosomal RNA. In Thermosynechococcus vestitus (strain NIES-2133 / IAM M-273 / BP-1), this protein is Small ribosomal subunit protein uS17.